The chain runs to 272 residues: MKLTKAQYDEIAQFLGHVQPTRQSLRKLKEKFPSQSQSTLLSIFSQEYQKQIKRTHAKHHTAEAVETYYQRYLNGVMKNAAAPVLLELANEMDFAPSLMARIVLERFLQEQEQAIPSKTLINSMLRDPSQIPDGVLANQIYQCTVNDCCYGPLVDCIKHFINNRSCSLCVAEDQLRAKGYDKTPDFILEVPVAVEGHIIHWIESKASFGDESSHQAYLQDQFWSYWNRFGPGLVIYWYGFIEELDCHRERGILLKDCFPTDIVTLRHSMAQR.

It is found in the nucleus. The protein localises to the cytoplasm. Functionally, may play a role in erythroid cell differentiation. The polypeptide is CDAN1-interacting nuclease 1 (CDIN1) (Gallus gallus (Chicken)).